We begin with the raw amino-acid sequence, 516 residues long: Probable malate:quinone oxidoreductase (516 aa).

This sequence belongs to the MQO family. FAD serves as cofactor.

The enzyme catalyses (S)-malate + a quinone = a quinol + oxaloacetate. Its pathway is carbohydrate metabolism; tricarboxylic acid cycle; oxaloacetate from (S)-malate (quinone route): step 1/1. In Mycobacterium sp. (strain MCS), this protein is Probable malate:quinone oxidoreductase.